The chain runs to 304 residues: 4-diphosphocytidyl-2-C-methyl-D-erythritol kinase (304 aa).

Lys20 is an active-site residue. An ATP-binding site is contributed by 106–116 (PVASGIGGGSG). Asp148 is a catalytic residue.

It belongs to the GHMP kinase family. IspE subfamily.

The enzyme catalyses 4-CDP-2-C-methyl-D-erythritol + ATP = 4-CDP-2-C-methyl-D-erythritol 2-phosphate + ADP + H(+). The protein operates within isoprenoid biosynthesis; isopentenyl diphosphate biosynthesis via DXP pathway; isopentenyl diphosphate from 1-deoxy-D-xylulose 5-phosphate: step 3/6. Catalyzes the phosphorylation of the position 2 hydroxy group of 4-diphosphocytidyl-2C-methyl-D-erythritol. The polypeptide is 4-diphosphocytidyl-2-C-methyl-D-erythritol kinase (Bartonella bacilliformis (strain ATCC 35685 / KC583 / Herrer 020/F12,63)).